The chain runs to 323 residues: Ubiquinone biosynthesis protein COQ4, mitochondrial (323 aa).

Residues His203, Asp204, His207, and Glu219 each coordinate Zn(2+).

The protein belongs to the COQ4 family. Component of a multi-subunit COQ enzyme complex, composed of at least COQ3, COQ4, COQ5, COQ6, COQ7 and COQ9. Requires Zn(2+) as cofactor.

It is found in the mitochondrion inner membrane. It catalyses the reaction a 4-hydroxy-3-methoxy-5-(all-trans-polyprenyl)benzoate + H(+) = a 2-methoxy-6-(all-trans-polyprenyl)phenol + CO2. It functions in the pathway cofactor biosynthesis; ubiquinone biosynthesis. In terms of biological role, lyase that catalyzes the C1-decarboxylation of 4-hydroxy-3-methoxy-5-(all-trans-polyprenyl)benzoic acid into 2-methoxy-6-(all-trans-polyprenyl)phenol during ubiquinone biosynthesis. In Eremothecium gossypii (strain ATCC 10895 / CBS 109.51 / FGSC 9923 / NRRL Y-1056) (Yeast), this protein is Ubiquinone biosynthesis protein COQ4, mitochondrial.